The sequence spans 155 residues: Aspartate carbamoyltransferase regulatory chain (155 aa).

Zn(2+) is bound by residues Cys-113, Cys-118, Cys-139, and Cys-142.

It belongs to the PyrI family. In terms of assembly, contains catalytic and regulatory chains. Zn(2+) serves as cofactor.

Involved in allosteric regulation of aspartate carbamoyltransferase. The protein is Aspartate carbamoyltransferase regulatory chain of Methanoculleus marisnigri (strain ATCC 35101 / DSM 1498 / JR1).